Reading from the N-terminus, the 120-residue chain is Movement protein TGB2 (120 aa).

The Cytoplasmic segment spans residues 1-8 (MPFAQPPD). The chain crosses the membrane as a helical span at residues 9–29 (YSKSVFPIAVGIAVAVVLFTL). The Lumenal segment spans residues 30–71 (TRSTLPQVGDNIHNLPHGGNYQDGTKRISYCGPRDSFPSSSL). A helical transmembrane segment spans residues 72 to 92 (ISSGTPMIIGIIIFLIFAIYV). Topologically, residues 93–120 (SEKWSRSGSRRCSCCVPGAPACTATVHE) are cytoplasmic.

The protein belongs to the Tymovirales TGBp2 protein family.

Its subcellular location is the host endoplasmic reticulum membrane. Functionally, plays a role in viral cell-to-cell propagation, by facilitating genome transport to neighboring plant cells through plasmosdesmata,. The sequence is that of Movement protein TGB2 from Crataegus (hawthorn).